A 101-amino-acid chain; its full sequence is NAD(P)H-quinone oxidoreductase subunit 4L, chloroplastic (101 aa).

Helical transmembrane passes span Met2 to Ile22, Met32 to Phe52, and Ile61 to Val81.

Belongs to the complex I subunit 4L family. In terms of assembly, NDH is composed of at least 16 different subunits, 5 of which are encoded in the nucleus.

The protein localises to the plastid. It localises to the chloroplast thylakoid membrane. It carries out the reaction a plastoquinone + NADH + (n+1) H(+)(in) = a plastoquinol + NAD(+) + n H(+)(out). It catalyses the reaction a plastoquinone + NADPH + (n+1) H(+)(in) = a plastoquinol + NADP(+) + n H(+)(out). Functionally, NDH shuttles electrons from NAD(P)H:plastoquinone, via FMN and iron-sulfur (Fe-S) centers, to quinones in the photosynthetic chain and possibly in a chloroplast respiratory chain. The immediate electron acceptor for the enzyme in this species is believed to be plastoquinone. Couples the redox reaction to proton translocation, and thus conserves the redox energy in a proton gradient. The sequence is that of NAD(P)H-quinone oxidoreductase subunit 4L, chloroplastic from Fagopyrum esculentum subsp. ancestrale (Wild buckwheat).